The sequence spans 545 residues: CTP synthase (545 aa).

Residues 1-266 (MTHFIFVTGG…DDLICERFGF (266 aa)) form an amidoligase domain region. Ser-13 contributes to the CTP binding site. Ser-13 lines the UTP pocket. ATP is bound by residues 14–19 (SLGKGI) and Asp-71. Mg(2+) contacts are provided by Asp-71 and Glu-140. Residues 147-149 (DIE), 187-192 (KTKPTQ), and Lys-223 contribute to the CTP site. Residues 187 to 192 (KTKPTQ) and Lys-223 contribute to the UTP site. Residue 239 to 241 (KDA) coordinates ATP. In terms of domain architecture, Glutamine amidotransferase type-1 spans 292–543 (RVAMVGKYVE…IDAAKTQHQK (252 aa)). Gly-353 contacts L-glutamine. The active-site Nucleophile; for glutamine hydrolysis is the Cys-380. L-glutamine-binding positions include 381–384 (LGMQ), Glu-404, and Arg-471. Active-site residues include His-516 and Glu-518.

Belongs to the CTP synthase family. As to quaternary structure, homotetramer.

The enzyme catalyses UTP + L-glutamine + ATP + H2O = CTP + L-glutamate + ADP + phosphate + 2 H(+). It carries out the reaction L-glutamine + H2O = L-glutamate + NH4(+). It catalyses the reaction UTP + NH4(+) + ATP = CTP + ADP + phosphate + 2 H(+). Its pathway is pyrimidine metabolism; CTP biosynthesis via de novo pathway; CTP from UDP: step 2/2. Allosterically activated by GTP, when glutamine is the substrate; GTP has no effect on the reaction when ammonia is the substrate. The allosteric effector GTP functions by stabilizing the protein conformation that binds the tetrahedral intermediate(s) formed during glutamine hydrolysis. Inhibited by the product CTP, via allosteric rather than competitive inhibition. In terms of biological role, catalyzes the ATP-dependent amination of UTP to CTP with either L-glutamine or ammonia as the source of nitrogen. Regulates intracellular CTP levels through interactions with the four ribonucleotide triphosphates. This Acinetobacter baumannii (strain ACICU) protein is CTP synthase.